Reading from the N-terminus, the 284-residue chain is Release factor glutamine methyltransferase (284 aa).

Residues 123–127 (GTGTG), Asp-146, Trp-174, and Asn-189 contribute to the S-adenosyl-L-methionine site. Substrate is bound at residue 189–192 (NPPY).

It belongs to the protein N5-glutamine methyltransferase family. PrmC subfamily.

It carries out the reaction L-glutaminyl-[peptide chain release factor] + S-adenosyl-L-methionine = N(5)-methyl-L-glutaminyl-[peptide chain release factor] + S-adenosyl-L-homocysteine + H(+). In terms of biological role, methylates the class 1 translation termination release factors RF1/PrfA and RF2/PrfB on the glutamine residue of the universally conserved GGQ motif. The polypeptide is Release factor glutamine methyltransferase (Francisella tularensis subsp. tularensis (strain SCHU S4 / Schu 4)).